The following is a 560-amino-acid chain: DNA ligase B (560 aa).

Lys-124 acts as the N6-AMP-lysine intermediate in catalysis.

This sequence belongs to the NAD-dependent DNA ligase family. LigB subfamily.

It catalyses the reaction NAD(+) + (deoxyribonucleotide)n-3'-hydroxyl + 5'-phospho-(deoxyribonucleotide)m = (deoxyribonucleotide)n+m + AMP + beta-nicotinamide D-nucleotide.. In terms of biological role, catalyzes the formation of phosphodiester linkages between 5'-phosphoryl and 3'-hydroxyl groups in double-stranded DNA using NAD as a coenzyme and as the energy source for the reaction. In Escherichia coli O7:K1 (strain IAI39 / ExPEC), this protein is DNA ligase B.